Here is a 783-residue protein sequence, read N- to C-terminus: Cation/H(+) antiporter 11 (783 aa).

12 consecutive transmembrane segments (helical) span residues 31–51, 61–81, 101–120, 135–155, 175–195, 205–225, 244–264, 276–295, 300–322, 360–380, 389–409, and 418–438; these read VVFG…FFCI, IGVS…PQLF, AALR…LMTV, VVIG…LNLF, VIVI…LLEL, LALS…IVAT, AVII…QWII, IYIH…FVFF, VLGP…ALEA, IFLT…LCLY, LAVS…YEAV, and ATYA…PMVV.

The protein belongs to the monovalent cation:proton antiporter 2 (CPA2) transporter (TC 2.A.37) family. CHX (TC 2.A.37.4) subfamily. In terms of tissue distribution, specifically expressed in pollen.

The protein resides in the membrane. Functionally, may operate as a cation/H(+) antiporter. The protein is Cation/H(+) antiporter 11 (CHX11) of Arabidopsis thaliana (Mouse-ear cress).